The primary structure comprises 406 residues: Bifunctional enzyme Fae/Hps (406 aa).

The segment at 1-164 (MSDIYEIGEA…AEKDRGTHPI (164 aa)) is formaldehyde-activating enzyme. Residue His-20 is the Proton donor of the active site. Residues Asp-22, Leu-51, Lys-69, Thr-71, and Gln-86 each contribute to the substrate site. The 3-hexulose-6-phosphate synthase stretch occupies residues 165–406 (MGFKAMKLWN…RLALDEDEKI (242 aa)).

The protein in the N-terminal section; belongs to the formaldehyde-activating enzyme family. In the C-terminal section; belongs to the HPS/KGPDC family. HPS subfamily.

It carries out the reaction 5,6,7,8-tetrahydromethanopterin + formaldehyde = 5,10-methylenetetrahydromethanopterin + H2O. The catalysed reaction is D-ribulose 5-phosphate + formaldehyde = D-arabino-hex-3-ulose 6-phosphate. Its pathway is carbohydrate biosynthesis; D-ribose 5-phosphate biosynthesis. Functionally, catalyzes the condensation of formaldehyde with tetrahydromethanopterin (H(4)MPT) to 5,10-methylenetetrahydromethanopterin. Its function is as follows. Catalyzes the reversible formation of ribulose-5-phosphate and formaldehyde from 3-hexulose-6-phosphate. This chain is Bifunctional enzyme Fae/Hps, found in Methanosphaera stadtmanae (strain ATCC 43021 / DSM 3091 / JCM 11832 / MCB-3).